Consider the following 1433-residue polypeptide: Bacillopeptidase F (1433 aa).

Residues 1–30 form the signal peptide; that stretch reads MRKKTKNRLISSVLSTVVISSLLFPGAAGA. Positions 31-194 are excised as a propeptide; that stretch reads SSKVTSPSVK…NMKKAQKAIK (164 aa). One can recognise an Inhibitor I9 domain in the interval 68 to 177; that stretch reads TFLIKFKDLA…KVLPNEKRQL (110 aa). Residues 200 to 512 enclose the Peptidase S8 domain; that stretch reads EWNVDQIDAP…HGLVNAFDAV (313 aa). Residues Asp-227, His-274, and Ser-452 each act as charge relay system in the active site. Positions 756–1433 are excised as a propeptide; the sequence is SAYKGQNIQV…NGKLNMNTEN (678 aa). A disordered region spans residues 800–830; the sequence is KLGVEKPSGKQKKKPVNPKKAKPSANTAVKH. The span at 808 to 821 shows a compositional bias: basic residues; that stretch reads GKQKKKPVNPKKAK.

It belongs to the peptidase S8 family.

Its subcellular location is the secreted. This chain is Bacillopeptidase F (bpr), found in Bacillus subtilis (strain 168).